Reading from the N-terminus, the 139-residue chain is Ribulose bisphosphate carboxylase small subunit (139 aa).

This sequence belongs to the RuBisCO small chain family. As to quaternary structure, heterohexadecamer of 8 large and 8 small subunits.

The protein localises to the plastid. The protein resides in the chloroplast. Functionally, ruBisCO catalyzes two reactions: the carboxylation of D-ribulose 1,5-bisphosphate, the primary event in carbon dioxide fixation, as well as the oxidative fragmentation of the pentose substrate in the photorespiration process. Both reactions occur simultaneously and in competition at the same active site. Although the small subunit is not catalytic it is essential for maximal activity. The polypeptide is Ribulose bisphosphate carboxylase small subunit (Olisthodiscus luteus (Marine phytoflagellate)).